Reading from the N-terminus, the 220-residue chain is Large ribosomal subunit protein eL15 (220 aa).

Basic and acidic residues predominate over residues 197 to 207 (KKRHEASRGAR). The tract at residues 197 to 220 (KKRHEASRGARDPWQIAEKLKEEK) is disordered.

It belongs to the eukaryotic ribosomal protein eL15 family.

The sequence is that of Large ribosomal subunit protein eL15 from Desulfurococcus amylolyticus (strain DSM 18924 / JCM 16383 / VKM B-2413 / 1221n) (Desulfurococcus kamchatkensis).